The sequence spans 277 residues: Small ribosomal subunit protein uS2 (277 aa).

Residues Met-1–Glu-78 form a disordered region.

This sequence belongs to the universal ribosomal protein uS2 family.

This chain is Small ribosomal subunit protein uS2, found in Natronomonas pharaonis (strain ATCC 35678 / DSM 2160 / CIP 103997 / JCM 8858 / NBRC 14720 / NCIMB 2260 / Gabara) (Halobacterium pharaonis).